The following is a 793-amino-acid chain: uncharacterized protein (793 aa).

Residues M1–A22 form the signal peptide. C23 carries the N-palmitoyl cysteine lipid modification. C23 is lipidated: S-diacylglycerol cysteine. Disordered regions lie at residues L181–V200, K212–V264, and K444–N504. Residues K212–G227 show a composition bias toward basic and acidic residues. Residues A237–Q246 are compositionally biased toward polar residues. The span at T247–V264 shows a compositional bias: basic and acidic residues. Residues N449–L468 are compositionally biased toward polar residues. A compositionally biased stretch (basic and acidic residues) spans E472 to S485. A compositionally biased stretch (low complexity) spans K491 to N504.

This sequence belongs to the MG185/MG260 family.

It is found in the cell membrane. This is an uncharacterized protein from Mycoplasma pneumoniae (strain ATCC 29342 / M129 / Subtype 1) (Mycoplasmoides pneumoniae).